Here is an 825-residue protein sequence, read N- to C-terminus: Glycerol-3-phosphate acyltransferase (825 aa).

The short motif at 304 to 309 (CHRSHM) is the HXXXXD motif element. The disordered stretch occupies residues 803–825 (MPAETSNQPEAPETPEPEGKTES).

It belongs to the GPAT/DAPAT family.

Its subcellular location is the cell inner membrane. It catalyses the reaction sn-glycerol 3-phosphate + an acyl-CoA = a 1-acyl-sn-glycero-3-phosphate + CoA. It participates in phospholipid metabolism; CDP-diacylglycerol biosynthesis; CDP-diacylglycerol from sn-glycerol 3-phosphate: step 1/3. The polypeptide is Glycerol-3-phosphate acyltransferase (Yersinia pseudotuberculosis serotype O:1b (strain IP 31758)).